A 190-amino-acid chain; its full sequence is Threonylcarbamoyl-AMP synthase (190 aa).

The YrdC-like domain maps to 7-190; it reads TGSIAAVVDL…ALTGELFRQG (184 aa).

Belongs to the SUA5 family. TsaC subfamily.

It is found in the cytoplasm. It carries out the reaction L-threonine + hydrogencarbonate + ATP = L-threonylcarbamoyladenylate + diphosphate + H2O. Functionally, required for the formation of a threonylcarbamoyl group on adenosine at position 37 (t(6)A37) in tRNAs that read codons beginning with adenine. Catalyzes the conversion of L-threonine, HCO(3)(-)/CO(2) and ATP to give threonylcarbamoyl-AMP (TC-AMP) as the acyladenylate intermediate, with the release of diphosphate. This is Threonylcarbamoyl-AMP synthase from Salmonella paratyphi A (strain ATCC 9150 / SARB42).